The sequence spans 183 residues: UPF0398 protein PEPE_0933 (183 aa).

The protein belongs to the UPF0398 family.

The chain is UPF0398 protein PEPE_0933 from Pediococcus pentosaceus (strain ATCC 25745 / CCUG 21536 / LMG 10740 / 183-1w).